Consider the following 843-residue polypeptide: Envelope glycoprotein gp160 (843 aa).

A signal peptide spans 1–33; it reads MRVREMQRNWQHLGKWGLLFLGILIICNANATD. The N-linked (GlcNAc...) asparagine; by host glycan is linked to Asn30. Over 34 to 671 the chain is Extracellular; it reads DLWVTVYYGV…ITNWLWYIKI (638 aa). Cysteines 55 and 75 form a disulfide. N-linked (GlcNAc...) asparagine; by host glycosylation is found at Asn89, Asn131, Asn136, Asn143, Asn156, Asn160, Asn186, Asn197, Asn234, Asn262, Asn276, Asn289, Asn301, Asn333, Asn338, Asn343, Asn353, and Asn359. 5 disulfide bridges follow: Cys120/Cys205, Cys127/Cys196, Cys132/Cys157, Cys218/Cys247, and Cys228/Cys239. Residues 132-156 form a V1 region; that stretch reads CTDVNITMSDINGTSLKEDQGEIKN. The segment at 157 to 196 is V2; it reads CSFNVTTELKDKKRKQQALFYRLDVEPIKNSSNIYKLISC. The V3 stretch occupies residues 296-329; the sequence is CRRPNNNTRKGIRIGPGQTFFATGEIIGDIRKAY. The cysteines at positions 296 and 330 are disulfide-linked. The tract at residues 361 to 371 is CD4-binding loop; that stretch reads SSGGDVEITTH. An intrachain disulfide couples Cys375 to Cys432. Residues 382-405 form a V4 region; that stretch reads YNTSGLFNETEVANNTNENITLPC. N-linked (GlcNAc...) asparagine; by host glycosylation is found at Asn383, Asn389, Asn395, Asn400, and Asn435. 2 V5 regions span residues 448–458 and 450–458; these read DIDGKEILRPI and DGKEILRPI. Residues 499–519 form a fusion peptide region; the sequence is AVGMGAVLFGFLGAAGSTMGA. Residues 561-579 are immunosuppression; that stretch reads KQLQARILAVERYLKDQQL. A disulfide bridge links Cys585 with Cys591. N-linked (GlcNAc...) asparagine; by host glycans are attached at residues Asn598, Asn603, Asn612, and Asn624. The stretch at 620–654 forms a coiled coil; sequence KEIDNYTKTIYSLIEDAQNQQERNEQELLALDKWD. The MPER; binding to GalCer stretch occupies residues 649–670; sequence ALDKWDSLWSWFSITNWLWYIK. Residues 672 to 692 form a helical membrane-spanning segment; the sequence is FIMIVGGLIGLRIVFAVLSVV. The Cytoplasmic segment spans residues 693–843; the sequence is NRVRQGYSPL…IRQGAERFLL (151 aa). Residues 699–702 carry the YXXL motif; contains endocytosis signal motif; sequence YSPL. Positions 709–731 are disordered; sequence PNPRGPDRPGGIEEEGGEPDRDR. Residue Cys751 is the site of S-palmitoyl cysteine; by host attachment. A Di-leucine internalization motif motif is present at residues 842-843; it reads LL.

The protein belongs to the HIV-1 env protein family. The mature envelope protein (Env) consists of a homotrimer of non-covalently associated gp120-gp41 heterodimers. The resulting complex protrudes from the virus surface as a spike. There seems to be as few as 10 spikes on the average virion. Interacts with host CD4, CCR5 and CXCR4. Gp120 also interacts with the C-type lectins CD209/DC-SIGN and CLEC4M/DC-SIGNR (collectively referred to as DC-SIGN(R)). Gp120 and gp41 interact with GalCer. Gp120 interacts with host ITGA4/ITGB7 complex; on CD4+ T-cells, this interaction results in rapid activation of integrin ITGAL/LFA-1, which facilitates efficient cell-to-cell spreading of HIV-1. Gp120 interacts with cell-associated heparan sulfate; this interaction increases virus infectivity on permissive cells and may be involved in infection of CD4- cells. As to quaternary structure, the mature envelope protein (Env) consists of a homotrimer of non-covalently associated gp120-gp41 heterodimers. The resulting complex protrudes from the virus surface as a spike. There seems to be as few as 10 spikes on the average virion. Post-translationally, highly glycosylated by host. The high number of glycan on the protein is reffered to as 'glycan shield' because it contributes to hide protein sequence from adaptive immune system. In terms of processing, palmitoylation of the transmembrane protein and of Env polyprotein (prior to its proteolytic cleavage) is essential for their association with host cell membrane lipid rafts. Palmitoylation is therefore required for envelope trafficking to classical lipid rafts, but not for viral replication. Specific enzymatic cleavages in vivo yield mature proteins. Envelope glycoproteins are synthesized as an inactive precursor that is heavily N-glycosylated and processed likely by host cell furin in the Golgi to yield the mature SU and TM proteins. The cleavage site between SU and TM requires the minimal sequence [KR]-X-[KR]-R. About 2 of the 9 disulfide bonds of gp41 are reduced by P4HB/PDI, following binding to CD4 receptor.

It is found in the virion membrane. Its subcellular location is the host cell membrane. The protein localises to the host endosome membrane. Functionally, oligomerizes in the host endoplasmic reticulum into predominantly trimers. In a second time, gp160 transits in the host Golgi, where glycosylation is completed. The precursor is then proteolytically cleaved in the trans-Golgi and thereby activated by cellular furin or furin-like proteases to produce gp120 and gp41. In terms of biological role, attaches the virus to the host lymphoid cell by binding to the primary receptor CD4. This interaction induces a structural rearrangement creating a high affinity binding site for a chemokine coreceptor like CXCR4 and/or CCR5. Acts as a ligand for CD209/DC-SIGN and CLEC4M/DC-SIGNR, which are respectively found on dendritic cells (DCs), and on endothelial cells of liver sinusoids and lymph node sinuses. These interactions allow capture of viral particles at mucosal surfaces by these cells and subsequent transmission to permissive cells. HIV subverts the migration properties of dendritic cells to gain access to CD4+ T-cells in lymph nodes. Virus transmission to permissive T-cells occurs either in trans (without DCs infection, through viral capture and transmission), or in cis (following DCs productive infection, through the usual CD4-gp120 interaction), thereby inducing a robust infection. In trans infection, bound virions remain infectious over days and it is proposed that they are not degraded, but protected in non-lysosomal acidic organelles within the DCs close to the cell membrane thus contributing to the viral infectious potential during DCs' migration from the periphery to the lymphoid tissues. On arrival at lymphoid tissues, intact virions recycle back to DCs' cell surface allowing virus transmission to CD4+ T-cells. Acts as a class I viral fusion protein. Under the current model, the protein has at least 3 conformational states: pre-fusion native state, pre-hairpin intermediate state, and post-fusion hairpin state. During fusion of viral and target intracellular membranes, the coiled coil regions (heptad repeats) assume a trimer-of-hairpins structure, positioning the fusion peptide in close proximity to the C-terminal region of the ectodomain. The formation of this structure appears to drive apposition and subsequent fusion of viral and target cell membranes. Complete fusion occurs in host cell endosomes and is dynamin-dependent, however some lipid transfer might occur at the plasma membrane. The virus undergoes clathrin-dependent internalization long before endosomal fusion, thus minimizing the surface exposure of conserved viral epitopes during fusion and reducing the efficacy of inhibitors targeting these epitopes. Membranes fusion leads to delivery of the nucleocapsid into the cytoplasm. This Homo sapiens (Human) protein is Envelope glycoprotein gp160.